Reading from the N-terminus, the 261-residue chain is Small ribosomal subunit protein uS2 (261 aa).

Residues 222 to 261 (GKALREQDGEANEEQPISEEEKKEVLEEAMSEEDFEGDKE) form a disordered region. Acidic residues-rich tracts occupy residues 230–239 (GEANEEQPIS) and 248–261 (EEAM…GDKE).

The protein belongs to the universal ribosomal protein uS2 family.

This chain is Small ribosomal subunit protein uS2, found in Campylobacter lari (strain RM2100 / D67 / ATCC BAA-1060).